Consider the following 241-residue polypeptide: MRKIVIAGNWKMFKTQAESQEFLKEFLPALEETPQEREVLLCVPFTDLAILSQSLHGSLVQLGAQNVHWAENGAYTGEISGPMLTEIGVRYVIVGHSERRQFFGETDETVNLRLQAAQKYGLTPILCVGETKQQRDSGETESLIVSQLDKDLINVDQTNLVIAYEPIWAIGTGDTCETTEANRVIGLIRSQLKNPDVPIQYGGSVKPNNIDEIMAQPEIDGVLVGGASLEAASFARIVNYQ.

N9 to K11 lines the substrate pocket. The active-site Electrophile is the H96. E165 (proton acceptor) is an active-site residue. Substrate contacts are provided by residues G171, S204, and G225–G226.

It belongs to the triosephosphate isomerase family. In terms of assembly, homodimer.

Its subcellular location is the cytoplasm. The enzyme catalyses D-glyceraldehyde 3-phosphate = dihydroxyacetone phosphate. Its pathway is carbohydrate biosynthesis; gluconeogenesis. It functions in the pathway carbohydrate degradation; glycolysis; D-glyceraldehyde 3-phosphate from glycerone phosphate: step 1/1. Involved in the gluconeogenesis. Catalyzes stereospecifically the conversion of dihydroxyacetone phosphate (DHAP) to D-glyceraldehyde-3-phosphate (G3P). In Trichormus variabilis (strain ATCC 29413 / PCC 7937) (Anabaena variabilis), this protein is Triosephosphate isomerase.